The chain runs to 421 residues: SH2 domain-containing protein 4A (421 aa).

2 positions are modified to phosphoserine: S117 and S123. Residues 132-271 (DLQAMKKTEP…FLQPLGIPPK (140 aa)) form a disordered region. 2 stretches are compositionally biased toward basic and acidic residues: residues 163–201 (TRKDDKAQTKPVKEKDHEEMKQTEDEKTKQIYKSWKEDS) and 211–230 (KAADEKRRSLAKQAREDYKR). S232 bears the Phosphoserine mark. One can recognise an SH2 domain in the interval 315–407 (WFHGILTLKK…LGKELLLYPC (93 aa)).

Interacts with ESR1. In terms of tissue distribution, in the kidney, expressed only in the glomerulus. Expressed in T-cells, B-cells, macrophages and dendritic cells (at protein level). In adult, highest levels are found in muscle and lung with lower levels in kidney.

The protein resides in the cytoplasm. Its function is as follows. Inhibits estrogen-induced cell proliferation by competing with PLCG for binding to ESR1, blocking the effect of estrogen on PLCG and repressing estrogen-induced proliferation. May play a role in T-cell development and function. The chain is SH2 domain-containing protein 4A (Sh2d4a) from Mus musculus (Mouse).